Here is a 354-residue protein sequence, read N- to C-terminus: DNA polymerase IV (354 aa).

One can recognise a UmuC domain in the interval isoleucine 6–glycine 187. Residues aspartate 10 and aspartate 105 each contribute to the Mg(2+) site. Glutamate 106 is a catalytic residue.

Belongs to the DNA polymerase type-Y family. In terms of assembly, monomer. It depends on Mg(2+) as a cofactor.

It localises to the cytoplasm. The enzyme catalyses DNA(n) + a 2'-deoxyribonucleoside 5'-triphosphate = DNA(n+1) + diphosphate. Its function is as follows. Poorly processive, error-prone DNA polymerase involved in untargeted mutagenesis. Copies undamaged DNA at stalled replication forks, which arise in vivo from mismatched or misaligned primer ends. These misaligned primers can be extended by PolIV. Exhibits no 3'-5' exonuclease (proofreading) activity. May be involved in translesional synthesis, in conjunction with the beta clamp from PolIII. This chain is DNA polymerase IV, found in Pseudomonas putida (strain ATCC 700007 / DSM 6899 / JCM 31910 / BCRC 17059 / LMG 24140 / F1).